Reading from the N-terminus, the 351-residue chain is MAKTASDISLTRQAMSLTEDLMTPNAAIYWADLTISAAVMWGGFLIAATTSSLALGLGAALLSMLALYRGLSFIHELTHIRDDEAPGFRVGWNVLVGVPLMTPSLMYEGVHNIHHIKDRFGTRLDPEYLPLSRFTPLKLAGFLFIALLAPLGVILRSAILIPLSFLVPSLRRYLKTKLSALIINPDFVREDLGRWRKAWVIQDVACWLWSWAVIAGLGLGVVPVRVVLTGLAIFSLATFLNQARTLVAHHWDNDGDKMTLEEQFLDSVNVPPPNLASALWAPVGLRYHALHHLLPRLPYHNMAKAHARLVEALGADSLYHRASEPGLFEALGDLFRRVRQKNAEARNQPAH.

A run of 4 helical transmembrane segments spans residues 26–46, 47–67, 141–161, and 204–224; these read AAIY…GFLI, AATT…MLAL, GFLF…AILI, and VACW…VVPV.

Belongs to the fatty acid desaturase type 1 family.

The protein resides in the cell inner membrane. The protein operates within lipid metabolism; sphingolipid metabolism. Its function is as follows. Involved in de novo bacterial ceramide synthesis. This is Ceramide hydroxylase from Caulobacter vibrioides (strain NA1000 / CB15N) (Caulobacter crescentus).